The chain runs to 81 residues: Sulfur carrier protein TusA (81 aa).

C19 (cysteine persulfide intermediate) is an active-site residue.

This sequence belongs to the sulfur carrier protein TusA family.

The protein localises to the cytoplasm. In terms of biological role, sulfur carrier protein which probably makes part of a sulfur-relay system. The protein is Sulfur carrier protein TusA of Shewanella sp. (strain MR-4).